Reading from the N-terminus, the 171-residue chain is Transcription antitermination protein NusB (171 aa).

The protein belongs to the NusB family.

Its function is as follows. Involved in transcription antitermination. Required for transcription of ribosomal RNA (rRNA) genes. Binds specifically to the boxA antiterminator sequence of the ribosomal RNA (rrn) operons. This is Transcription antitermination protein NusB from Pelodictyon phaeoclathratiforme (strain DSM 5477 / BU-1).